Here is a 397-residue protein sequence, read N- to C-terminus: Exodeoxyribonuclease 7 large subunit (397 aa).

The protein belongs to the XseA family. In terms of assembly, heterooligomer composed of large and small subunits.

The protein resides in the cytoplasm. It catalyses the reaction Exonucleolytic cleavage in either 5'- to 3'- or 3'- to 5'-direction to yield nucleoside 5'-phosphates.. Functionally, bidirectionally degrades single-stranded DNA into large acid-insoluble oligonucleotides, which are then degraded further into small acid-soluble oligonucleotides. This Anaplasma marginale (strain Florida) protein is Exodeoxyribonuclease 7 large subunit.